Here is a 95-residue protein sequence, read N- to C-terminus: Aspartyl/glutamyl-tRNA(Asn/Gln) amidotransferase subunit C (95 aa).

Belongs to the GatC family. Heterotrimer of A, B and C subunits.

It carries out the reaction L-glutamyl-tRNA(Gln) + L-glutamine + ATP + H2O = L-glutaminyl-tRNA(Gln) + L-glutamate + ADP + phosphate + H(+). The catalysed reaction is L-aspartyl-tRNA(Asn) + L-glutamine + ATP + H2O = L-asparaginyl-tRNA(Asn) + L-glutamate + ADP + phosphate + 2 H(+). In terms of biological role, allows the formation of correctly charged Asn-tRNA(Asn) or Gln-tRNA(Gln) through the transamidation of misacylated Asp-tRNA(Asn) or Glu-tRNA(Gln) in organisms which lack either or both of asparaginyl-tRNA or glutaminyl-tRNA synthetases. The reaction takes place in the presence of glutamine and ATP through an activated phospho-Asp-tRNA(Asn) or phospho-Glu-tRNA(Gln). The sequence is that of Aspartyl/glutamyl-tRNA(Asn/Gln) amidotransferase subunit C from Ruthia magnifica subsp. Calyptogena magnifica.